Reading from the N-terminus, the 437-residue chain is Protein translocase subunit SecY (437 aa).

10 helical membrane passes run 23 to 43, 77 to 97, 125 to 145, 154 to 174, 183 to 203, 217 to 237, 271 to 291, 315 to 335, 367 to 387, and 395 to 415; these read IVFL…PIPG, IFAL…LLTL, LILA…IAGI, FYFY…LMWL, IGNG…PSAI, ILLF…VVFM, MAGV…ATII, YLIL…GLVF, IMLR…LIPE, and VPFY…IDFI.

It belongs to the SecY/SEC61-alpha family. Component of the Sec protein translocase complex. Heterotrimer consisting of SecY, SecE and SecG subunits. The heterotrimers can form oligomers, although 1 heterotrimer is thought to be able to translocate proteins. Interacts with the ribosome. Interacts with SecDF, and other proteins may be involved. Interacts with SecA.

It localises to the cell membrane. In terms of biological role, the central subunit of the protein translocation channel SecYEG. Consists of two halves formed by TMs 1-5 and 6-10. These two domains form a lateral gate at the front which open onto the bilayer between TMs 2 and 7, and are clamped together by SecE at the back. The channel is closed by both a pore ring composed of hydrophobic SecY resides and a short helix (helix 2A) on the extracellular side of the membrane which forms a plug. The plug probably moves laterally to allow the channel to open. The ring and the pore may move independently. This Buchnera aphidicola subsp. Acyrthosiphon pisum (strain APS) (Acyrthosiphon pisum symbiotic bacterium) protein is Protein translocase subunit SecY.